We begin with the raw amino-acid sequence, 289 residues long: ATP synthase subunit a (289 aa).

Transmembrane regions (helical) follow at residues 43-63, 103-123, 160-180, 193-213, 232-252, and 259-279; these read AFHL…LFIF, VIAP…AVDL, FCVF…GGFI, IFVQ…TLIA, VFIL…GLGV, and AVFH…LTIV.

The protein belongs to the ATPase A chain family. F-type ATPases have 2 components, CF(1) - the catalytic core - and CF(0) - the membrane proton channel. CF(1) has five subunits: alpha(3), beta(3), gamma(1), delta(1), epsilon(1). CF(0) has three main subunits: a(1), b(2) and c(9-12). The alpha and beta chains form an alternating ring which encloses part of the gamma chain. CF(1) is attached to CF(0) by a central stalk formed by the gamma and epsilon chains, while a peripheral stalk is formed by the delta and b chains.

The protein localises to the cell inner membrane. Key component of the proton channel; it plays a direct role in the translocation of protons across the membrane. The sequence is that of ATP synthase subunit a from Pseudomonas putida (strain GB-1).